We begin with the raw amino-acid sequence, 282 residues long: Putative dolichyldiphosphatase (282 aa).

The next 2 helical transmembrane spans lie at 26–46 (LLCA…ATLI) and 93–113 (MPSS…LFLL). Residues 121-153 (QQQQQQQKQKQRERKKQVTNVKTTTTNGSGNGS) form a disordered region. The segment covering 138–148 (VTNVKTTTTNG) has biased composition (low complexity). The next 2 membrane-spanning stretches (helical) occupy residues 173 to 193 (WSFA…GAVA) and 207 to 227 (VLVG…VTHV).

It belongs to the dolichyldiphosphatase family.

Its subcellular location is the endoplasmic reticulum membrane. The enzyme catalyses a di-trans,poly-cis-dolichyl diphosphate + H2O = a di-trans,poly-cis-dolichyl phosphate + phosphate + H(+). It functions in the pathway protein modification; protein glycosylation. The chain is Putative dolichyldiphosphatase from Neurospora crassa (strain ATCC 24698 / 74-OR23-1A / CBS 708.71 / DSM 1257 / FGSC 987).